The sequence spans 193 residues: Ion-translocating oxidoreductase complex subunit A (193 aa).

6 helical membrane-spanning segments follow: residues 5–25 (LLLFVGTVLVNNFVLVKFLGL), 47–67 (FVMTLASICAWLIDTWILIPL), 72–92 (LRTLAFILVIAVVVQFTEMVV), 102–122 (LLGIFLPLITTNCAVLGVALL), 134–154 (ALYGFSAAVGFSLVMVLFAAI), and 171–191 (AIALITAGLMSLAFMGFSGLV).

It belongs to the NqrDE/RnfAE family. The complex is composed of six subunits: RsxA, RsxB, RsxC, RsxD, RsxE and RsxG.

The protein localises to the cell inner membrane. Part of a membrane-bound complex that couples electron transfer with translocation of ions across the membrane. Required to maintain the reduced state of SoxR. The sequence is that of Ion-translocating oxidoreductase complex subunit A from Salmonella agona (strain SL483).